Reading from the N-terminus, the 252-residue chain is Triosephosphate isomerase (252 aa).

Asn-9–Lys-11 contacts substrate. The active-site Electrophile is the His-100. Catalysis depends on Glu-171, which acts as the Proton acceptor. Substrate is bound by residues Gly-177, Ser-216, and Gly-237–Gly-238.

The protein belongs to the triosephosphate isomerase family. In terms of assembly, homodimer.

The protein resides in the cytoplasm. It carries out the reaction D-glyceraldehyde 3-phosphate = dihydroxyacetone phosphate. It participates in carbohydrate biosynthesis; gluconeogenesis. The protein operates within carbohydrate degradation; glycolysis; D-glyceraldehyde 3-phosphate from glycerone phosphate: step 1/1. Its function is as follows. Involved in the gluconeogenesis. Catalyzes stereospecifically the conversion of dihydroxyacetone phosphate (DHAP) to D-glyceraldehyde-3-phosphate (G3P). The sequence is that of Triosephosphate isomerase from Polynucleobacter asymbioticus (strain DSM 18221 / CIP 109841 / QLW-P1DMWA-1) (Polynucleobacter necessarius subsp. asymbioticus).